We begin with the raw amino-acid sequence, 437 residues long: Diaminopimelate decarboxylase (437 aa).

K81 bears the N6-(pyridoxal phosphate)lysine mark. Pyridoxal 5'-phosphate contacts are provided by residues G256 and 298 to 301 (EPGR). R301, R337, and Y341 together coordinate substrate. C366 acts as the Proton donor in catalysis. Positions 367 and 396 each coordinate substrate. Y396 is a binding site for pyridoxal 5'-phosphate.

This sequence belongs to the Orn/Lys/Arg decarboxylase class-II family. LysA subfamily. Homodimer. The cofactor is pyridoxal 5'-phosphate.

It carries out the reaction meso-2,6-diaminopimelate + H(+) = L-lysine + CO2. It participates in amino-acid biosynthesis; L-lysine biosynthesis via DAP pathway; L-lysine from DL-2,6-diaminopimelate: step 1/1. Functionally, specifically catalyzes the decarboxylation of meso-diaminopimelate (meso-DAP) to L-lysine. This Actinosynnema pretiosum subsp. auranticum protein is Diaminopimelate decarboxylase.